The following is a 378-amino-acid chain: 23S rRNA (uracil(747)-C(5))-methyltransferase RlmC (378 aa).

Residues Cys-3, Cys-11, Cys-14, and Cys-87 each coordinate [4Fe-4S] cluster. S-adenosyl-L-methionine-binding residues include Gln-212, Phe-241, Glu-262, and Asn-309. Cys-336 acts as the Nucleophile in catalysis.

Belongs to the class I-like SAM-binding methyltransferase superfamily. RNA M5U methyltransferase family. RlmC subfamily.

The catalysed reaction is uridine(747) in 23S rRNA + S-adenosyl-L-methionine = 5-methyluridine(747) in 23S rRNA + S-adenosyl-L-homocysteine + H(+). Catalyzes the formation of 5-methyl-uridine at position 747 (m5U747) in 23S rRNA. In Shewanella halifaxensis (strain HAW-EB4), this protein is 23S rRNA (uracil(747)-C(5))-methyltransferase RlmC.